A 164-amino-acid chain; its full sequence is Aspartic proteinase nepenthesin-1 (164 aa).

The region spanning 17–164 (YLMXLSIGTP…VSFVSAQCGA (148 aa)) is the Peptidase A1 domain. The active site involves D35. An N-linked (GlcNAc...) asparagine glycan is attached at N93.

It belongs to the peptidase A1 family. Parenchymal cells surrounding the secretory glands.

The protein resides in the secreted. The enzyme catalyses Similar to pepsin, but also cleaves on either side of Asp and at Lys-|-Arg.. With respect to regulation, inhibited by pepstatin and by diazoacetyl-D,L-norleucine methyl ester (DAN) in the presence of Cu(2+) ions. Functionally, extracellular proteinase found in the pitcher fluid of carnivorous plants. Digest prey for nitrogen uptake. The protein is Aspartic proteinase nepenthesin-1 of Nepenthes distillatoria (Pitcher plant).